The following is a 360-amino-acid chain: NAD(P)H-quinone oxidoreductase subunit 1, chloroplastic (360 aa).

9 helical membrane-spanning segments follow: residues 27-47 (IWIFVPIFSLILGIITGVLVI), 98-118 (FSIGPSIAVISILLSYSVIPF), 129-149 (IGIFLWIAISSIAPIGLLMSG), 165-185 (AAQSISYEIPLTLCVLSISLL), 203-223 (FWGWNLWRQPIGFIIFLISSL), 248-268 (YSGIKFGLFYVASYLNLLISS), 269-289 (LFVTVLYLGGWNISIPYISIL), 297-317 (IFGTTIGIFITLAKTYLFLFI), and 340-360 (FLLPISLGNLLLTTSFQLFSL).

It belongs to the complex I subunit 1 family. NDH is composed of at least 16 different subunits, 5 of which are encoded in the nucleus.

It is found in the plastid. The protein resides in the chloroplast thylakoid membrane. It carries out the reaction a plastoquinone + NADH + (n+1) H(+)(in) = a plastoquinol + NAD(+) + n H(+)(out). The enzyme catalyses a plastoquinone + NADPH + (n+1) H(+)(in) = a plastoquinol + NADP(+) + n H(+)(out). In terms of biological role, NDH shuttles electrons from NAD(P)H:plastoquinone, via FMN and iron-sulfur (Fe-S) centers, to quinones in the photosynthetic chain and possibly in a chloroplast respiratory chain. The immediate electron acceptor for the enzyme in this species is believed to be plastoquinone. Couples the redox reaction to proton translocation, and thus conserves the redox energy in a proton gradient. The sequence is that of NAD(P)H-quinone oxidoreductase subunit 1, chloroplastic from Barbarea verna (Land cress).